We begin with the raw amino-acid sequence, 286 residues long: 4-hydroxybenzoate octaprenyltransferase (286 aa).

Helical transmembrane passes span 21–40 (GTLL…AGGM), 95–115 (ILFV…NGLV), 142–162 (FLGV…TGEV), 167–187 (WWLF…YAMV), 211–231 (IIGL…WSAE), 235–255 (LYGL…MLIF), and 266–286 (FLNN…DYLI).

The protein belongs to the UbiA prenyltransferase family. It depends on Mg(2+) as a cofactor.

The protein resides in the cell inner membrane. The enzyme catalyses all-trans-octaprenyl diphosphate + 4-hydroxybenzoate = 4-hydroxy-3-(all-trans-octaprenyl)benzoate + diphosphate. The protein operates within cofactor biosynthesis; ubiquinone biosynthesis. Functionally, catalyzes the prenylation of para-hydroxybenzoate (PHB) with an all-trans polyprenyl group. Mediates the second step in the final reaction sequence of ubiquinone-8 (UQ-8) biosynthesis, which is the condensation of the polyisoprenoid side chain with PHB, generating the first membrane-bound Q intermediate 3-octaprenyl-4-hydroxybenzoate. This chain is 4-hydroxybenzoate octaprenyltransferase, found in Shewanella putrefaciens (strain CN-32 / ATCC BAA-453).